Consider the following 134-residue polypeptide: Holo-[acyl-carrier-protein] synthase (134 aa).

Mg(2+) contacts are provided by Asp-8 and Glu-57.

It belongs to the P-Pant transferase superfamily. AcpS family. Mg(2+) is required as a cofactor.

The protein resides in the cytoplasm. It carries out the reaction apo-[ACP] + CoA = holo-[ACP] + adenosine 3',5'-bisphosphate + H(+). Functionally, transfers the 4'-phosphopantetheine moiety from coenzyme A to a Ser of acyl-carrier-protein. The chain is Holo-[acyl-carrier-protein] synthase from Rhizobium etli (strain CIAT 652).